The sequence spans 300 residues: CDAN1-interacting nuclease 1 (300 aa).

The protein resides in the nucleus. The protein localises to the cytoplasm. Functionally, may play a role in erythroid cell differentiation. In Danio rerio (Zebrafish), this protein is CDAN1-interacting nuclease 1 (cdin1).